The chain runs to 78 residues: MSKVCQVTGKRPTTGNNVSHANNKTKRRFLPNLHHHRFWVESEQRFVRLRVSSKGMRIIDRKGIDQVLSDLRARGEKV.

Residues 1–22 (MSKVCQVTGKRPTTGNNVSHAN) are disordered. A compositionally biased stretch (polar residues) spans 11-22 (RPTTGNNVSHAN).

This sequence belongs to the bacterial ribosomal protein bL28 family.

This is Large ribosomal subunit protein bL28 from Alkalilimnicola ehrlichii (strain ATCC BAA-1101 / DSM 17681 / MLHE-1).